The sequence spans 379 residues: Putative phosphatidate phosphatase (379 aa).

The disordered stretch occupies residues 1–53 (MPAVKIIMSTETSASETTPLRRSENETPDHKELAQSNSNSRQTTVNSNNNNYS). The segment covering 9–18 (STETSASETT) has biased composition (polar residues). Over residues 19–33 (PLRRSENETPDHKEL) the composition is skewed to basic and acidic residues. Residues 35–53 (QSNSNSRQTTVNSNNNNYS) are compositionally biased toward low complexity. An N-linked (GlcNAc...) asparagine glycan is attached at Asn51. Helical transmembrane passes span 90-110 (VGLD…FFLL) and 138-158 (MLYF…EVII). Asn169 carries an N-linked (GlcNAc...) asparagine glycan. The next 2 membrane-spanning stretches (helical) occupy residues 266–286 (SFPS…ALYL) and 330–350 (AGSL…SDLF).

It belongs to the PA-phosphatase related phosphoesterase family. In terms of assembly, homodimer. This complex seems not to be involved in substrate recognition, it may confer only structural or functional stability. As to expression, expressed in embryonic gut in a pattern that guides germ cells towards mesoderm (initially in hindgut and then on lower side of gut). During extended germ band stage, expressed in ectoderm as a medial band throughout the trunk.

It is found in the membrane. The enzyme catalyses a 1,2-diacyl-sn-glycero-3-phosphate + H2O = a 1,2-diacyl-sn-glycerol + phosphate. Functionally, responsible for guiding the germ cells early in the process of migration from the lumen of the developing gut towards the overlying mesoderm, where the germ cells enter the gonads. May be involved in lipid metabolism. The polypeptide is Putative phosphatidate phosphatase (wun) (Drosophila melanogaster (Fruit fly)).